A 782-amino-acid chain; its full sequence is MGSDWDEIKRLAADFQKAQLTSTLQKLSERNCVEIVTLLLEKQMLEVVFTNDGKEYITPDHLEREIQDELYVNGGRANLVEVSKTLNVDLSRIEVLAERIAAENPSVHLVLGQLIDEDYISHIAQEINEKLVLRGEISISELASQFDLPSDFLQHDVVEKHLGKIIKGRQDAANPRVFFTQAYIQRCKAKIRGALAAITRPINVAVILQQIGVQEKIFHSLLDEIAPAGQVTSKLANSQYVPHIYAKTQADWVNSFYKQNSFLEYDAIQKLGISDAKSYIRKQFPNEEFLFLKRVALGARLVELTVVTALNECSATKQYLDLTTILPSNLSEEDIEEVFSTIMAQKHSNPSNFVYLDSIVFSQPYLAQLVQPCQALAESQAKAAIDGGVYQQYIVEKTLAQKGNASTQELEDDGKVDKRDERRKKASSGKAGGGAQGRETKTKSTKKHQRGKAAAHNDSDDEDDVQQGSRGGGGVNKKAVKPLELVKTADIVKLITASLEEEGLEHLSKPIAALYTNQFNQTALARAQELFEATPQTNRRQTHAAIQDRINTLLIDIRLYEKGLKLFPQDTQTQLVKYLLKSLGNDICNELSLYVAGECNLTVKNTNLNVDQRNKLAQECEAQYRAALLEQNKALNKSIDEFELATETVLKACSMIIKKVDKKKDRLLIADHKKKLQKQLLECQDPALLLHLAALILFTAISGSILHASGKFVSAILQHIRGSLNEEQNALLLRYHDLVLQVLQATPDSSESKMANEHLQAMQAQVVELAQNFSRASVSKAD.

Positions 404–477 are disordered; that stretch reads NASTQELEDD…GSRGGGGVNK (74 aa). A compositionally biased stretch (basic residues) spans 443–453; the sequence is KSTKKHQRGKA.

Belongs to the UFL1 family.

Its function is as follows. E3 UFM1-protein ligase that mediates ufmylation of target proteins. This chain is E3 UFM1-protein ligase 1 homolog, found in Drosophila erecta (Fruit fly).